Reading from the N-terminus, the 312-residue chain is Ribosomal RNA small subunit methyltransferase H (312 aa).

S-adenosyl-L-methionine-binding positions include 30–32 (GGH), aspartate 50, phenylalanine 80, aspartate 98, and glutamine 105.

It belongs to the methyltransferase superfamily. RsmH family.

It localises to the cytoplasm. It catalyses the reaction cytidine(1402) in 16S rRNA + S-adenosyl-L-methionine = N(4)-methylcytidine(1402) in 16S rRNA + S-adenosyl-L-homocysteine + H(+). In terms of biological role, specifically methylates the N4 position of cytidine in position 1402 (C1402) of 16S rRNA. This chain is Ribosomal RNA small subunit methyltransferase H, found in Lawsonia intracellularis (strain PHE/MN1-00).